We begin with the raw amino-acid sequence, 116 residues long: MKGPSILAVAALALLLVLSVLENSSGAPQRLSEKRNWTPQAMLYLKGAQGHRFISDQSRRKELADRPPPERRNPNLQLLTLPEAAALFLASLEKPQKDEGGDFDKSKLLEDRRFYW.

Positions 1 to 26 are cleaved as a signal peptide; sequence MKGPSILAVAALALLLVLSVLENSSG. The propeptide occupies 27 to 35; that stretch reads APQRLSEKR. Gln49 carries the post-translational modification Glutamine amide. 2 propeptides span residues 50–116 and 74–116; these read GHRF…RFYW and PNLQ…RFYW. A compositionally biased stretch (basic and acidic residues) spans 56-73; it reads DQSRRKELADRPPPERRN. Residues 56-75 are disordered; that stretch reads DQSRRKELADRPPPERRNPN.

It belongs to the spexin family. Widely expressed; predominantly expressed in epithelial cells in the skin, respiratory, digestive, urinary and reproductive systems, retina, adrenal gland and various brain regions. In the adrenal gland, expressed in parenchymal cells of the cortex and in ganglionic cells and intermingled cortical cells of the medulla. Expressed in the type I glomic cells within the carotid body (at protein level). Widely expressed. Strongly expressed in esophagus, liver, pancreas, kidney, brain, hypothalamus, thyroid and ovary. Expressed in the zona glomerulosa (ZG) and zona fasciculata/reticularis (ZF/R) of the adrenal gland. Also expressed in stomach, lung, skeletal muscle, heart, uterus, spleen, adrenal gland and testis. Weakly expressed in small intestine, thymus, urinary bladder and adenohypophysis. In the brain, is expressed in the Barrington's nucleus, with lesser amount in the ventrolateral caudal periaqueductal gray (PAG) and in the mesopontine tegmentum.

The protein localises to the secreted. Its subcellular location is the extracellular space. It is found in the cytoplasmic vesicle. It localises to the secretory vesicle. In terms of biological role, plays a role as a central modulator of cardiovascular and renal function and nociception. Also plays a role in energy metabolism and storage. Inhibits adrenocortical cell proliferation with minor stimulation on corticosteroid release. Its function is as follows. Acts as a ligand for galanin receptors GALR2 and GALR3. Intracerebroventricular administration of the peptide induces an increase in arterial blood pressure, a decrease in both heart rate and renal excretion and delayed natriuresis. Intraventricular administration of the peptide induces antinociceptive activity. Intraperitoneal administration of the peptide induces a reduction in food consumption and body weight. Inhibits long chain fatty acid uptake into adipocytes. Also induces contraction of muscarinic-like stomach smooth muscles. Functionally, intracerebroventricular administration of the peptide induces a decrease in heart rate, but no change in arterial pressure, and an increase in urine flow rate. Intraventricular administration of the peptide induces antinociceptive activity. In Rattus norvegicus (Rat), this protein is Spexin (SPX).